The chain runs to 233 residues: Large ribosomal subunit protein uL1 (233 aa).

The protein belongs to the universal ribosomal protein uL1 family. In terms of assembly, part of the 50S ribosomal subunit.

In terms of biological role, binds directly to 23S rRNA. The L1 stalk is quite mobile in the ribosome, and is involved in E site tRNA release. Functionally, protein L1 is also a translational repressor protein, it controls the translation of the L11 operon by binding to its mRNA. The chain is Large ribosomal subunit protein uL1 from Geobacillus kaustophilus (strain HTA426).